The chain runs to 272 residues: Acidic leucine-rich nuclear phosphoprotein 32 family member B (272 aa).

4 LRR repeats span residues 18 to 38, 43 to 64, 65 to 87, and 89 to 110; these read AVRELVLDNCKAMDGKIEGLT, NLEFLSLISVGLFSVSDLPKLP, KLKKLELSENRIFGGLDRLAEEL, and SLTHLNLSGNNLKDISTLEPLK. The LRRCT domain occupies 123–161; that stretch reads CEVTNRSDYRETVFRLLPQLSYLDGYDREDQEAPDSDVE. The segment covering 149–254 has biased composition (acidic residues); that stretch reads DREDQEAPDS…DEDEDEEEEE (106 aa). A disordered region spans residues 149 to 272; it reads DREDQEAPDS…RETDDEGEDD (124 aa). Residues Ser164 and Ser171 each carry the phosphoserine modification. A compositionally biased stretch (basic and acidic residues) spans 255 to 265; it reads SGKGEKRKRET. Residues 260-263 carry the Nuclear localization signal motif; sequence KRKR. Thr265 carries the phosphothreonine modification.

It belongs to the ANP32 family. As to quaternary structure, interacts with histones H3 and H4. Interacts with KLF5; this interaction induces promoter region-specific histone incorporation and inhibition of histone acetylation by ANP32B. Post-translationally, some glutamate residues are glycylated by TTLL8. This modification occurs exclusively on glutamate residues and results in a glycine chain on the gamma-carboxyl group. In terms of processing, directly cleaved by caspase-3/CASP3.

The protein resides in the nucleus. Its function is as follows. Multifunctional protein that is involved in the regulation of many processes including cell proliferation, apoptosis, cell cycle progression or transcription. Regulates the proliferation of neuronal stem cells, differentiation of leukemic cells and progression from G1 to S phase of the cell cycle. As negative regulator of caspase-3-dependent apoptosis, may act as an antagonist of ANP32A in regulating tissue homeostasis. Exhibits histone chaperone properties, able to recruit histones to certain promoters, thus regulating the transcription of specific genes. Also plays an essential role in the nucleocytoplasmic transport of specific mRNAs via the uncommon nuclear mRNA export receptor XPO1/CRM1. Participates in the regulation of adequate adaptive immune responses by acting on mRNA expression and cell proliferation. The sequence is that of Acidic leucine-rich nuclear phosphoprotein 32 family member B (Anp32b) from Mus musculus (Mouse).